The following is a 31-amino-acid chain: Cytochrome b6-f complex subunit 6 (31 aa).

A helical transmembrane segment spans residues Ile4 to Gly24.

It belongs to the PetL family. As to quaternary structure, the 4 large subunits of the cytochrome b6-f complex are cytochrome b6, subunit IV (17 kDa polypeptide, PetD), cytochrome f and the Rieske protein, while the 4 small subunits are PetG, PetL, PetM and PetN. The complex functions as a dimer.

The protein localises to the plastid. Its subcellular location is the chloroplast thylakoid membrane. In terms of biological role, component of the cytochrome b6-f complex, which mediates electron transfer between photosystem II (PSII) and photosystem I (PSI), cyclic electron flow around PSI, and state transitions. PetL is important for photoautotrophic growth as well as for electron transfer efficiency and stability of the cytochrome b6-f complex. The polypeptide is Cytochrome b6-f complex subunit 6 (Oryza sativa subsp. japonica (Rice)).